A 1738-amino-acid polypeptide reads, in one-letter code: Complement C4-B (1738 aa).

The signal sequence occupies residues 1–19; sequence MRLLWGLAWVFSFCASSLQ. Cys66 and Cys95 form a disulfide bridge. N-linked (GlcNAc...) asparagine glycosylation is present at Asn224. Cysteines 633 and 667 form a disulfide. Residues 674–677 constitute a propeptide that is removed on maturation; it reads RQKR. Intrachain disulfides connect Cys700–Cys726, Cys701–Cys733, and Cys714–Cys734. Residues 700 to 734 form the Anaphylatoxin-like domain; that stretch reads CCQDGMTKLPMKRTCEQRAARVPQQACREPFLSCC. The N-linked (GlcNAc...) asparagine glycan is linked to Asn743. The segment at residues 1006 to 1009 is a cross-link (isoglutamyl cysteine thioester (Cys-Gln)); the sequence is CAEQ. N-linked (GlcNAc...) asparagine glycosylation is found at Asn1324 and Asn1387. Tyr1413, Tyr1416, and Tyr1417 each carry sulfotyrosine. Residues 1444 to 1447 constitute a propeptide that is removed on maturation; the sequence is RRRR. Intrachain disulfides connect Cys1465–Cys1529, Cys1577–Cys1582, Cys1589–Cys1667, Cys1612–Cys1736, and Cys1712–Cys1721. Residues 1589–1736 form the NTR domain; that stretch reads CPRLLRSLER…FLMEFSSRGC (148 aa).

In absence of complement activation, circulates in blood as a disulfide-linked trimer of an alpha, beta and gamma chain. In terms of assembly, complement C4b is composed of complement C4b-A, complement C4 beta and complement C4 gamma chains that are associated via disulfide bonds. Non-enzymatic component of the C3 convertase, also named C4bC2b, composed of the serine protease complement C2b (C2), as well as complement C4b. Non-enzymatic component of the C5 convertase, also named C4bC2bC3b, composed of the serine protease complement C2b (C2), complement C3b, as well as complement C4b. Prior to secretion, the single-chain precursor is enzymatically cleaved by plasminogen (PLG) to yield non-identical chains alpha, beta and gamma. During activation of the complement systems, the alpha chain is cleaved into C4a and C4b by different proteases depending on the complement pathway: C4b stays linked to the beta and gamma chains, while C4a is released in the plasma. The alpha chain is cleaved by C1S to generate C4a and C4b following activation by the classical complement system. The alpha chain is cleaved to generate C4a and C4b by MASP2 following activation by the lectin complement system. The alpha chain is cleaved by GZMK to generate C4a and C4b following activation by the GZMK complement system. Further degradation of C4b by C1 into the inactive fragments C4c and C4d blocks the generation of C3 convertase. The proteolytic cleavages often are incomplete so that many structural forms can be found in plasma. In terms of processing, upon activation, the internal thioester bond reacts with carbohydrate antigens on the target surface to form amide or ester bonds, leading to covalent association with the surface of pathogens. Post-translationally, complement C4b interacts with complement C3b via a thioester linkage.

It localises to the secreted. The protein resides in the cell surface. In terms of biological role, precursor of non-enzymatic components of the classical, lectin and GZMK complement pathways, which consist in a cascade of proteins that leads to phagocytosis and breakdown of pathogens and signaling that strengthens the adaptive immune system. Non-enzymatic component of C3 and C5 convertases. Generated following cleavage by complement proteases (C1S, MASP2 or GZMK, depending on the complement pathway), it covalently attaches to the surface of pathogens, where it acts as an opsonin that marks the surface of antigens for removal. It then recruits the serine protease complement C2b to form the C3 and C5 convertases, which cleave and activate C3 and C5, respectively, the next components of the complement pathways. Complement C4b-A isotype is responsible for effective binding to form amide bonds with immune aggregates or protein antigens, while complement C4b-B isotype catalyzes the transacylation of the thioester carbonyl group to form ester bonds with carbohydrate antigens. Its function is as follows. Putative humoral mediator released following cleavage by complement proteases (C1S, MASP2 or GZMK, depending on the complement pathway). While it is strongly similar to anaphylatoxins, its role is unclear. Was reported to act as a mediator of local inflammatory process; however these effects were probably due to contamination with C3a and/C5a anaphylatoxins in biological assays. The polypeptide is Complement C4-B (Mus musculus (Mouse)).